The sequence spans 30 residues: Photosystem I reaction center subunit XII (30 aa).

Residues 7 to 26 form a helical membrane-spanning segment; it reads IFVALLFALVSAVLAIRLGT.

It belongs to the PsaM family.

Its subcellular location is the plastid. It is found in the chloroplast thylakoid membrane. The protein is Photosystem I reaction center subunit XII of Gracilaria tenuistipitata var. liui (Red alga).